Reading from the N-terminus, the 381-residue chain is Ecotin-like protein 3 (381 aa).

Residues 232-381 form a disordered region; that stretch reads EHLEVCPKNN…GSKADPVDGK (150 aa). Positions 273 to 292 are enriched in polar residues; it reads NESSPSRPRLSSTAYWPQEN. A compositionally biased stretch (basic and acidic residues) spans 336–347; sequence RKAEDDVYEKTM. Positions 363 to 372 are enriched in polar residues; it reads SASSTKSGNG.

It belongs to the protease inhibitor I11 (ecotin) family.

The polypeptide is Ecotin-like protein 3 (Leishmania major).